The primary structure comprises 315 residues: 4-diphosphocytidyl-2-C-methyl-D-erythritol kinase (315 aa).

K11 is an active-site residue. ATP is bound at residue 99 to 109; the sequence is PMAAGLAGGSA. D141 is an active-site residue.

This sequence belongs to the GHMP kinase family. IspE subfamily.

The catalysed reaction is 4-CDP-2-C-methyl-D-erythritol + ATP = 4-CDP-2-C-methyl-D-erythritol 2-phosphate + ADP + H(+). It functions in the pathway isoprenoid biosynthesis; isopentenyl diphosphate biosynthesis via DXP pathway; isopentenyl diphosphate from 1-deoxy-D-xylulose 5-phosphate: step 3/6. Functionally, catalyzes the phosphorylation of the position 2 hydroxy group of 4-diphosphocytidyl-2C-methyl-D-erythritol. This chain is 4-diphosphocytidyl-2-C-methyl-D-erythritol kinase, found in Synechocystis sp. (strain ATCC 27184 / PCC 6803 / Kazusa).